Reading from the N-terminus, the 193-residue chain is Putative kinase protein 029R (193 aa).

9-17 provides a ligand contact to ATP; sequence GIIGSGKSS. Substrate contacts are provided by Glu-31, Tyr-43, and Gln-54. Glu-78 acts as the Proton acceptor in catalysis. Substrate-binding residues include Arg-79 and Glu-142.

It belongs to the DCK/DGK family.

This is Putative kinase protein 029R from Aedes vexans (Inland floodwater mosquito).